The following is a 1368-amino-acid chain: Kinesin-like protein KIF24 (1368 aa).

The SAM domain maps to 1–64 (MASWLYECLC…FQLIKIIKIM (64 aa)). A disordered region spans residues 89-112 (ELRSGPRRQLNFDSPADNKDRNAS). 2 positions are modified to phosphoserine: Ser102 and Ser112. Residues 223 to 546 (KIRVCVRKRP…LRYADRVKEL (324 aa)) enclose the Kinesin motor domain. Residue 313–320 (GQTGAGKT) participates in ATP binding. Residue Ser478 is modified to Phosphoserine. The interval 478-709 (SLLALKECIR…STKCKKVQTV (232 aa)) is interaction with MPHOSPH9. Positions 557 to 576 (TSRNRTSGNSSPKRIQSSPG) are enriched in polar residues. Disordered stretches follow at residues 557–584 (TSRN…DKCS) and 602–639 (GSTR…SPSQ). At Ser584 the chain carries Phosphoserine. A Phosphothreonine; by NEK2 modification is found at Thr621. A Phosphoserine; by NEK2 modification is found at Ser622. Position 646 is a phosphoserine (Ser646). 5 disordered regions span residues 651-670 (TVRS…PLCS), 729-753 (HRAE…WTNI), 792-849 (QYRP…NTLE), 864-938 (GPEK…LAEK), and 952-984 (RGGG…EEDG). Residues 819-830 (QVEELDDSDFSE) show a composition bias toward acidic residues. Residues Ser826 and Ser829 each carry the phosphoserine modification. 2 stretches are compositionally biased toward polar residues: residues 839–849 (QRATKQRNTLE) and 871–881 (ERQQSLFSSPR). Residues 882 to 906 (TGDKKDLTKSWVDSRDPINHRRAAL) are compositionally biased toward basic and acidic residues. Ser1012 carries the post-translational modification Phosphoserine. Disordered regions lie at residues 1054 to 1073 (MSLL…QLVQ) and 1086 to 1148 (GGPV…SREA). Residues 1106 to 1119 (SSATRHLWLSSSPP) are compositionally biased toward polar residues. Residues 1138–1148 (HPADKLPSREA) show a composition bias toward basic and acidic residues.

This sequence belongs to the TRAFAC class myosin-kinesin ATPase superfamily. Kinesin family. As to quaternary structure, interacts with CCP110, CEP97, TALPID3. Interacts with MPHOSPH9.

It localises to the cytoplasm. The protein resides in the cytoskeleton. It is found in the microtubule organizing center. Its subcellular location is the centrosome. The protein localises to the centriole. Its function is as follows. Microtubule-dependent motor protein that acts as a negative regulator of ciliogenesis by mediating recruitment of CCP110 to mother centriole in cycling cells, leading to restrict nucleation of cilia at centrioles. Mediates depolymerization of microtubules of centriolar origin, possibly to suppress aberrant cilia formation. Following activation by NEK2 involved in disassembly of primary cilium during G2/M phase but does not disassemble fully formed ciliary axonemes. As cilium assembly and disassembly is proposed to coexist in a dynamic equilibrium may suppress nascent cilium assembly and, potentially, ciliar re-assembly in cells that have already disassembled their cilia ensuring the completion of cilium removal in the later stages of the cell cycle. Plays an important role in recruiting MPHOSPH9, a negative regulator of cilia formation to the distal end of mother centriole. This Homo sapiens (Human) protein is Kinesin-like protein KIF24 (KIF24).